We begin with the raw amino-acid sequence, 257 residues long: Small ribosomal subunit protein uS2 (257 aa).

It belongs to the universal ribosomal protein uS2 family.

The sequence is that of Small ribosomal subunit protein uS2 from Bartonella quintana (strain Toulouse) (Rochalimaea quintana).